Here is a 414-residue protein sequence, read N- to C-terminus: Serine/threonine transporter SstT (414 aa).

The Cytoplasmic portion of the chain corresponds to 2 to 15; it reads TTQRSPGLFRRLAH. The helical transmembrane segment at 16–36 threads the bilayer; sequence GSLVKQILVGLVLGILLAWIS. Residues 37–45 are Periplasmic-facing; it reads KPAAEAVGL. Residues 46–66 form a helical membrane-spanning segment; sequence LGTLFVGALKAVAPILVLMLV. Residues 67-83 lie on the Cytoplasmic side of the membrane; that stretch reads MASIANHQHGQKTNILP. A helical transmembrane segment spans residues 84 to 104; sequence ILFLYLLGTFSAALAAVVFSF. At 105–142 the chain is on the periplasmic side; sequence AFPSTLHLSSSAGDISPPSGIVEVMRGLVMSMVSNPID. Residues 143 to 163 traverse the membrane as a helical segment; it reads ALLKGNYIGILVWAIGLGFAL. Residues 164 to 179 are Cytoplasmic-facing; sequence RHGNETTKNLVNDMSN. A helical membrane pass occupies residues 180 to 200; it reads AVTFMVKLVIRFAPIGIFGLV. The Periplasmic portion of the chain corresponds to 201-217; the sequence is SSTLATTGFSTLWGYAQ. A helical membrane pass occupies residues 218–238; sequence LLVVLVGCMLLVALVVNPLLV. Topologically, residues 239 to 299 are cytoplasmic; the sequence is WWKIRRNPFP…VSIPLGATIN (61 aa). The helical transmembrane segment at 300-320 threads the bilayer; sequence MAGAAITITVLTLAAVNTLGI. At 321 to 331 the chain is on the periplasmic side; that stretch reads PVDLPTALLLS. A helical transmembrane segment spans residues 332-352; the sequence is VVASLCACGASGVAGGSLLLI. The Cytoplasmic segment spans residues 353-414; it reads PLACNMFGIS…DRLANSALRN (62 aa).

This sequence belongs to the dicarboxylate/amino acid:cation symporter (DAACS) (TC 2.A.23) family.

The protein localises to the cell inner membrane. The catalysed reaction is L-serine(in) + Na(+)(in) = L-serine(out) + Na(+)(out). The enzyme catalyses L-threonine(in) + Na(+)(in) = L-threonine(out) + Na(+)(out). Functionally, involved in the import of serine and threonine into the cell, with the concomitant import of sodium (symport system). In Shigella dysenteriae serotype 1 (strain Sd197), this protein is Serine/threonine transporter SstT.